Here is a 235-residue protein sequence, read N- to C-terminus: Small ribosomal subunit protein uS3 (235 aa).

The KH type-2 domain occupies 39 to 107 (VRKFLNKELA…PAQINIAEVK (69 aa)). Positions 215–235 (AQSEQQPADKPKKAPRGKGRK) are disordered.

Belongs to the universal ribosomal protein uS3 family. As to quaternary structure, part of the 30S ribosomal subunit. Forms a tight complex with proteins S10 and S14.

Binds the lower part of the 30S subunit head. Binds mRNA in the 70S ribosome, positioning it for translation. The polypeptide is Small ribosomal subunit protein uS3 (Haemophilus influenzae (strain ATCC 51907 / DSM 11121 / KW20 / Rd)).